The following is a 279-amino-acid chain: Phosphonoacetaldehyde hydrolase (279 aa).

The Nucleophile role is filled by D20. The Mg(2+) site is built by D20 and A22. Residue K62 is the Schiff-base intermediate with substrate of the active site. D196 provides a ligand contact to Mg(2+).

This sequence belongs to the HAD-like hydrolase superfamily. PhnX family. Homodimer. The cofactor is Mg(2+).

The enzyme catalyses phosphonoacetaldehyde + H2O = acetaldehyde + phosphate + H(+). Its function is as follows. Involved in phosphonate degradation. The chain is Phosphonoacetaldehyde hydrolase from Aeromonas hydrophila subsp. hydrophila (strain ATCC 7966 / DSM 30187 / BCRC 13018 / CCUG 14551 / JCM 1027 / KCTC 2358 / NCIMB 9240 / NCTC 8049).